The primary structure comprises 322 residues: MEKQYRVLLYYKYVKIDEPEEFTAQHLKFCKELGLLGRILISEEGINGTVSGTVEQTEQYMNALKADPRFADMPIKIDEADGHAFRKMFVRHKKELVTLRLEDDVDPNVTTGKHLKPKDFYEQMQDPDTIVIDARNDYEYDLGHFRGAVRPDIEAFRELPDWIEEHKDMLEGKKILTYCTGGVRCEKFSGWLLKKGFEDVSQLDGGIVTYGKDPEVKGQMWDGQCYVFDERISVPVNRVEHVIIGKDYFTGEPCERYVNCANPACNKKMICTPENEYKYMRSCSHECRTNERNMYVKEHDMTQEEINERLALIEKEDHAAID.

In terms of domain architecture, Rhodanese spans 125 to 219 (QDPDTIVIDA…YGKDPEVKGQ (95 aa)). Cys-179 acts as the Cysteine persulfide intermediate in catalysis.

It belongs to the TrhO family.

The enzyme catalyses uridine(34) in tRNA + AH2 + O2 = 5-hydroxyuridine(34) in tRNA + A + H2O. In terms of biological role, catalyzes oxygen-dependent 5-hydroxyuridine (ho5U) modification at position 34 in tRNAs. The polypeptide is tRNA uridine(34) hydroxylase (Bacillus velezensis (strain DSM 23117 / BGSC 10A6 / LMG 26770 / FZB42) (Bacillus amyloliquefaciens subsp. plantarum)).